The sequence spans 446 residues: Probable glucan endo-1,3-beta-glucosidase eglC (446 aa).

Residues 1 to 18 form the signal peptide; the sequence is MQFTHLVALALALATSEA. E128 acts as the Proton donor in catalysis. N183 carries an N-linked (GlcNAc...) asparagine glycan. E239 functions as the Nucleophile in the catalytic mechanism. 2 N-linked (GlcNAc...) asparagine glycosylation sites follow: N364 and N370. A disordered region spans residues 393-416; the sequence is SSGAGASGASGQSSSSTGSSSAPS. Low complexity predominate over residues 401 to 416; that stretch reads ASGQSSSSTGSSSAPS. N423 carries GPI-anchor amidated asparagine lipidation. A propeptide spans 424–446 (removed in mature form); sequence AASGLSGSIFGAVVAVCLALAAL.

This sequence belongs to the glycosyl hydrolase 17 family. The GPI-anchor is attached to the protein in the endoplasmic reticulum and serves to target the protein to the cell surface. There, the glucosamine-inositol phospholipid moiety is cleaved off and the GPI-modified mannoprotein is covalently attached via its lipidless GPI glycan remnant to the 1,6-beta-glucan of the outer cell wall layer.

The protein resides in the cell membrane. It localises to the secreted. The protein localises to the cell wall. It catalyses the reaction Hydrolysis of (1-&gt;3)-beta-D-glucosidic linkages in (1-&gt;3)-beta-D-glucans.. Functionally, glucanases play a role in cell expansion during growth, in cell-cell fusion during mating, and in spore release during sporulation. This enzyme may be involved in beta-glucan degradation and also function biosynthetically as a transglycosylase. This Aspergillus fumigatus (strain ATCC MYA-4609 / CBS 101355 / FGSC A1100 / Af293) (Neosartorya fumigata) protein is Probable glucan endo-1,3-beta-glucosidase eglC (eglC).